Consider the following 1804-residue polypeptide: Collagen alpha-1(XI) chain (1804 aa).

An N-terminal signal peptide occupies residues 1 to 34; it reads MEPWSRWKTKRWIWDLTISTLVLTFLFQAREVRG. Positions 35–511 are cleaved as a propeptide — N-terminal propeptide; sequence AAPVDILKAL…SKGPTISAQE (477 aa). 2 disulfides stabilise this stretch: cysteine 60/cysteine 242 and cysteine 181/cysteine 235. The region spanning 70–242 is the Laminin G-like domain; that stretch reads DIAYRVTEEA…DYCDHYSPDC (173 aa). The interval 229–417 is nonhelical region; it reads KAAYDYCDHY…DFTETSINGH (189 aa). An N-linked (GlcNAc...) asparagine glycan is attached at asparagine 351. The interval 418–506 is triple-helical region (interrupted); it reads GAYGEKGQKG…YGGDGSKGPT (89 aa). The tract at residues 437-506 is disordered; it reads LVEGPPGPAG…YGGDGSKGPT (70 aa). The 49-residue stretch at 440–488 folds into the Collagen-like 1 domain; that stretch reads GPPGPAGPAGLMGPPGLQGPSGLPGDPGDRGPPGRPGLPGADGLPGPPG. Low complexity-rich tracts occupy residues 447 to 465 and 477 to 494; these read PAGL…LPGD and LPGA…LMLP. A short nonhelical segment region spans residues 507–509; it reads ISA. A telopeptide region spans residues 510–527; sequence QEAQAQAILQQARIALRG. A disordered region spans residues 526-1560; sequence RGPPGPMGLT…KTRRHTESIQ (1035 aa). A triple-helical region region spans residues 528–1540; it reads PPGPMGLTGR…PGPPGPPGEV (1013 aa). Collagen-like domains lie at 530-584, 581-639, 607-664, and 641-698; these read GPMG…GADG, GADG…EIGP, PGDK…PGQP, and GLPG…GPQG. 2 stretches are compositionally biased toward gly residues: residues 539–548 and 581–590; these read GPVGGPGSAG and GADGGRGMPG. Lysine 610 is modified (allysine). The span at 639-655 shows a compositional bias: low complexity; it reads PRGLPGEAGPRGLLGPR. Pro residues predominate over residues 697–708; sequence QGLPGPQGPIGP. Residues 715 to 726 show a composition bias toward low complexity; that stretch reads QGKPGLAGLPGA. The Collagen-like 6 domain maps to 746–804; it reads GPPGPQGPIGYPGPRGVKGADGVRGLKGSKGEKGEDGFPGFKGDMGLKGDRGEVGQVGP. Residues 805-814 show a composition bias toward basic and acidic residues; that stretch reads RGEDGPEGPK. Composition is skewed to low complexity over residues 873–901, 916–925, and 969–979; these read KPGP…PGPK, RGPQGPQGPV, and PQGPTGETGPI. Positions 1040-1049 are enriched in gly residues; the sequence is GLKGGEGPQG. Pro residues predominate over residues 1074-1083; the sequence is RPGPQGPPGP. The span at 1084–1108 shows a compositional bias: low complexity; sequence AGEKGAPGEKGPQGPAGRDGVQGPV. Gly residues predominate over residues 1160–1169; that stretch reads GIAGGDGEAG. Pro residues-rich tracts occupy residues 1216-1227 and 1341-1360; these read MGPPGPPGPRGP and QPGP…PGKR. Low complexity-rich tracts occupy residues 1383–1392 and 1417–1426; these read AEGPPGKTGP and QGLPGAAGQD. Collagen-like domains are found at residues 1391–1449, 1442–1492, and 1481–1539; these read GPVG…SKGE, GDPG…PGPA, and GAKG…PPGE. A compositionally biased stretch (pro residues) spans 1428–1437; sequence PPGPLGPPGL. Lysine 1450 carries the post-translational modification Allysine. The segment covering 1453-1462 has biased composition (low complexity); sequence PGLIGLIGPP. Gly residues predominate over residues 1481–1490; it reads GAKGDGGIPG. Pro residues predominate over residues 1491 to 1507; it reads PAGPIGPPGPPGLPGPA. Residues 1509–1519 are compositionally biased toward low complexity; the sequence is PKGNKGSSGPT. The span at 1528 to 1537 shows a compositional bias: pro residues; sequence PGPPGPPGPP. The segment at 1541-1561 is nonhelical region (C-terminal); that stretch reads IQPLPILSPKKTRRHTESIQA. Positions 1562–1804 are cleaved as a propeptide — C-terminal propeptide; it reads DAGDNILDYS…FEVGPACFLG (243 aa). The Fibrillar collagen NC1 domain maps to 1575–1803; it reads EEIFGSLNSL…GFEVGPACFL (229 aa). Cysteine 1605 and cysteine 1637 are disulfide-bonded. 5 residues coordinate Ca(2+): aspartate 1623, asparagine 1625, glutamine 1626, cysteine 1628, and aspartate 1631. Asparagine 1638 and asparagine 1707 each carry an N-linked (GlcNAc...) asparagine glycan. 2 disulfide bridges follow: cysteine 1646–cysteine 1801 and cysteine 1712–cysteine 1755.

This sequence belongs to the fibrillar collagen family. In terms of assembly, trimers composed of three different chains: alpha 1(XI), alpha 2(XI), and alpha 3(XI). Alpha 3(XI) is probably a post-translational modification of alpha 1(II). Post-translationally, prolines at the third position of the tripeptide repeating unit (G-X-Y) are hydroxylated in some or all of the chains. N-glycosylated.

It is found in the secreted. The protein resides in the extracellular space. The protein localises to the extracellular matrix. May play an important role in fibrillogenesis by controlling lateral growth of collagen II fibrils. This Rattus norvegicus (Rat) protein is Collagen alpha-1(XI) chain (Col11a1).